We begin with the raw amino-acid sequence, 205 residues long: GTP cyclohydrolase-2 (205 aa).

49-53 contacts GTP; sequence RLHSE. Residues cysteine 54, cysteine 65, and cysteine 67 each contribute to the Zn(2+) site. Residues glutamine 70, 92–94, and threonine 114 each bind GTP; that span reads EGR. The active-site Proton acceptor is aspartate 126. Arginine 128 acts as the Nucleophile in catalysis. GTP-binding residues include threonine 149 and lysine 154.

This sequence belongs to the GTP cyclohydrolase II family. Requires Zn(2+) as cofactor.

The enzyme catalyses GTP + 4 H2O = 2,5-diamino-6-hydroxy-4-(5-phosphoribosylamino)-pyrimidine + formate + 2 phosphate + 3 H(+). The protein operates within cofactor biosynthesis; riboflavin biosynthesis; 5-amino-6-(D-ribitylamino)uracil from GTP: step 1/4. In terms of biological role, catalyzes the conversion of GTP to 2,5-diamino-6-ribosylamino-4(3H)-pyrimidinone 5'-phosphate (DARP), formate and pyrophosphate. The chain is GTP cyclohydrolase-2 from Pseudomonas aeruginosa (strain UCBPP-PA14).